Here is a 170-residue protein sequence, read N- to C-terminus: Peptide deformylase-like (170 aa).

E139 is an active-site residue.

It belongs to the polypeptide deformylase family.

This is Peptide deformylase-like from Bradyrhizobium diazoefficiens (strain JCM 10833 / BCRC 13528 / IAM 13628 / NBRC 14792 / USDA 110).